Reading from the N-terminus, the 241-residue chain is Uridylate kinase (241 aa).

An ATP-binding site is contributed by 14–17 (KLSG). Glycine 56 is a binding site for UMP. Residues glycine 57 and arginine 61 each coordinate ATP. UMP-binding positions include aspartate 77 and 138–145 (TGNPFFTT). Residues threonine 165, tyrosine 171, and aspartate 174 each coordinate ATP.

Belongs to the UMP kinase family. In terms of assembly, homohexamer.

The protein localises to the cytoplasm. It catalyses the reaction UMP + ATP = UDP + ADP. It participates in pyrimidine metabolism; CTP biosynthesis via de novo pathway; UDP from UMP (UMPK route): step 1/1. Its activity is regulated as follows. Inhibited by UTP. In terms of biological role, catalyzes the reversible phosphorylation of UMP to UDP. This is Uridylate kinase from Psychrobacter cryohalolentis (strain ATCC BAA-1226 / DSM 17306 / VKM B-2378 / K5).